The primary structure comprises 171 residues: Adenine phosphoribosyltransferase (171 aa).

The protein belongs to the purine/pyrimidine phosphoribosyltransferase family. In terms of assembly, homodimer.

The protein localises to the cytoplasm. The enzyme catalyses AMP + diphosphate = 5-phospho-alpha-D-ribose 1-diphosphate + adenine. It participates in purine metabolism; AMP biosynthesis via salvage pathway; AMP from adenine: step 1/1. In terms of biological role, catalyzes a salvage reaction resulting in the formation of AMP, that is energically less costly than de novo synthesis. The chain is Adenine phosphoribosyltransferase from Shouchella clausii (strain KSM-K16) (Alkalihalobacillus clausii).